A 420-amino-acid polypeptide reads, in one-letter code: Histidine--tRNA ligase (420 aa).

The protein belongs to the class-II aminoacyl-tRNA synthetase family. In terms of assembly, homodimer.

The protein resides in the cytoplasm. The catalysed reaction is tRNA(His) + L-histidine + ATP = L-histidyl-tRNA(His) + AMP + diphosphate + H(+). This Streptomyces avermitilis (strain ATCC 31267 / DSM 46492 / JCM 5070 / NBRC 14893 / NCIMB 12804 / NRRL 8165 / MA-4680) protein is Histidine--tRNA ligase.